The sequence spans 567 residues: uncharacterized protein (567 aa).

The next 12 membrane-spanning stretches (helical) occupy residues 136-156 (LFCL…LIFA), 159-179 (FMGI…SDII), 193-213 (LLLG…SEVF), 217-237 (LCFL…FFFV), 258-278 (ILGG…LTFG), 291-311 (LLLL…SITE), 334-354 (FLIG…FQLV), 364-384 (LRLA…GILM), 393-415 (LLFS…HPGI), 426-446 (PANV…IFAF), 457-477 (TLYL…SAVI), and 536-553 (AQQF…LCIL).

This sequence belongs to the major facilitator superfamily.

The protein resides in the membrane. This is an uncharacterized protein from Schizosaccharomyces pombe (strain 972 / ATCC 24843) (Fission yeast).